The following is a 221-amino-acid chain: MDLAKYIDHTQLKPDTTKQSIVKIVEEAKQHEFASVCVNPHWVSYCYNELKDTPVKVCTVIGFPLGATSTETKIFETNQAIADGATEVDMVINVGELKSNNDAFVEKDIRAVVEAAKGKALTKVIIETSLLTEDEKVRACKLAKNAEADYVKTSTGFSGGGATVEDIRLMRETVGPEMGVKASGGVRDLEQTEAMIEAGATRIGASSGVAIVSGEQGTSDY.

D89 functions as the Proton donor/acceptor in the catalytic mechanism. The Schiff-base intermediate with acetaldehyde role is filled by K152. Catalysis depends on K181, which acts as the Proton donor/acceptor.

The protein belongs to the DeoC/FbaB aldolase family. DeoC type 1 subfamily.

It is found in the cytoplasm. It carries out the reaction 2-deoxy-D-ribose 5-phosphate = D-glyceraldehyde 3-phosphate + acetaldehyde. Its pathway is carbohydrate degradation; 2-deoxy-D-ribose 1-phosphate degradation; D-glyceraldehyde 3-phosphate and acetaldehyde from 2-deoxy-alpha-D-ribose 1-phosphate: step 2/2. Its function is as follows. Catalyzes a reversible aldol reaction between acetaldehyde and D-glyceraldehyde 3-phosphate to generate 2-deoxy-D-ribose 5-phosphate. The protein is Deoxyribose-phosphate aldolase 1 of Oceanobacillus iheyensis (strain DSM 14371 / CIP 107618 / JCM 11309 / KCTC 3954 / HTE831).